A 343-amino-acid polypeptide reads, in one-letter code: KRR1 small subunit processome component homolog (343 aa).

Positions 125–193 (DIIKIGNLVH…VRDIVVETMN (69 aa)) constitute a KH domain. Over residues 232-245 (NISKRKQPKVKKAK) the composition is skewed to basic residues. The disordered stretch occupies residues 232–343 (NISKRKQPKV…KLLKANKKKV (112 aa)). Residues 270-302 (FLNKEQKQAKRQQERSAKQADAAKRQDERRNKD) adopt a coiled-coil conformation. Positions 271 to 302 (LNKEQKQAKRQQERSAKQADAAKRQDERRNKD) are enriched in basic and acidic residues. A compositionally biased stretch (basic residues) spans 331 to 343 (LKAKLLKANKKKV).

This sequence belongs to the KRR1 family. In terms of assembly, monomer. Component of the ribosomal small subunit (SSU) processome.

It is found in the nucleus. It localises to the nucleolus. Functionally, required for 40S ribosome biogenesis. Involved in nucleolar processing of pre-18S ribosomal RNA and ribosome assembly. Binds to RNA. Required for female germline development, cell viability during eye development and for survival of dividing cells and epithelial cells during early wing disk development. This Drosophila ananassae (Fruit fly) protein is KRR1 small subunit processome component homolog.